Here is a 374-residue protein sequence, read N- to C-terminus: Alcohol dehydrogenase 3, mitochondrial (374 aa).

A mitochondrion-targeting transit peptide spans 1 to 26 (MLRLTSARSIVSPLRKGAFGSIRTLA). Residues Cys-70, His-93, Cys-124, Cys-127, Cys-130, Cys-138, and Cys-180 each coordinate Zn(2+). NAD(+) contacts are provided by residues 204-210 (GAAGGLG), Asp-228, Lys-233, 295-297 (VGL), and Arg-367.

The protein belongs to the zinc-containing alcohol dehydrogenase family. In terms of assembly, homotetramer. Zn(2+) serves as cofactor.

It is found in the mitochondrion matrix. The enzyme catalyses a primary alcohol + NAD(+) = an aldehyde + NADH + H(+). The catalysed reaction is a secondary alcohol + NAD(+) = a ketone + NADH + H(+). This Kluyveromyces lactis (strain ATCC 8585 / CBS 2359 / DSM 70799 / NBRC 1267 / NRRL Y-1140 / WM37) (Yeast) protein is Alcohol dehydrogenase 3, mitochondrial (ADH3).